The primary structure comprises 154 residues: Large ribosomal subunit protein uL13 (154 aa).

Belongs to the universal ribosomal protein uL13 family. In terms of assembly, part of the 50S ribosomal subunit.

Its function is as follows. This protein is one of the early assembly proteins of the 50S ribosomal subunit, although it is not seen to bind rRNA by itself. It is important during the early stages of 50S assembly. The sequence is that of Large ribosomal subunit protein uL13 from Rhodopseudomonas palustris (strain ATCC BAA-98 / CGA009).